Reading from the N-terminus, the 353-residue chain is MEVLRQMLVHKANNSSMSTHKGLNRTEPVRMTYDHCELLGQLSTLNFSAASNTFSSGYNTTIKGSAPKTIQTVSSLFSKDITKAMSDIGNLVARMFPTASAERAAVILDITVFGFIADDLLEDAALSSDSEAFDKLHMLMLRLVRNDSFSEDEYPEYQNLIRFTRPIFTKFQALASRTLLNRFAYTYQEYLQGVQWEASLQPNQIPDFETCKNVKRHVGAWLCYFVLAEFAREIEVPITVRGNLEVQKFVTLACDIASYDNDTFLLKKEIRDGVVSNTIVITYLHGAKRLQDALDRILEMRKQTESEILAITSNLPHFGKDDKVAREYINALTCVIGGNFEWCSKTTRYQDPK.

Mg(2+)-binding residues include aspartate 118, asparagine 261, and glutamate 269. Positions 118–122 (DDLLE) match the D(D/E)XX(D/E) motif motif. An NSE motif motif is present at residues 261-269 (NDTFLLKKE). Residues 342–349 (WCSKTTRY) carry the WxxxxxRY motif motif.

It belongs to the terpene synthase family. Mg(2+) is required as a cofactor.

Functionally, terpene synthase that may be involved in the production of volatile terpenoids. Does not show detectable terpene products with either farnesyl diphosphate (FPP) or geranyl diphosphate (GPP). P.polycephalum has a unique biology and these volatile terpenoids could function in internal communication of P.polycephalum, to mark the territory that have been explored, or they may be involved in chemotaxis. The protein is Terpene synthase 3 of Physarum polycephalum (Slime mold).